Here is a 373-residue protein sequence, read N- to C-terminus: Schlafen-like protein 1 (373 aa).

The interval 1-67 (MAALFEENDS…ELSSEEVDIP (67 aa)) is disordered. The segment at 247–373 (KAGAKIEFRT…NQVYRLESSV (127 aa)) is SLFN-like fold.

This sequence belongs to the Schlafen family. Component of the trimeric PUCH (precursor of 21U RNA 5'-end cleavage holoenzyme) complex; consisting of tofu-1, tofu-2 and either slfl-3 or slfl-4; which is required for processing of piRNA precursors. Within the complex, interacts (via N-terminus) with tofu-2 (via N-terminus); the interaction stabilizes tofu-2 and may form a functional nuclease. Within the complex, required for the interaction of tofu-2 (via N-terminus) with slfl-3 (via N-terminus). Interacts (via residues 82-172) with the PETISCO complex subunit tofu-6 (via residues 120-314); the interaction between the PETISCO and PUCH complex members enhances piRNA production in vivo. Expressed in the germline.

It is found in the cytoplasm. Its function is as follows. Component of the trimeric PUCH (precursor of 21U RNA 5'-end cleavage holoenzyme) complex, that acts as an endoribonuclease processing the 5'-end of precursor Piwi-interacting RNAs (piRNAs). The PUCH complex consists of tofu-1, tofu-2 and either slfl-3 or slfl-4, with tofu-2 exhibiting endoribonuclease activity. PUCH-mediated processing strictly requires a 7-methyl-G cap (m7 G-cap) and an uracil at position three (U3). PUCH also exhibits a strict bias for piRNA precursors with an A or G at position 1. Mature piRNA production is enhanced by the interaction of PUCH with the PETISCO complex, which is stabilizing piRNA precursors and allows their processing by PUCH. The polypeptide is Schlafen-like protein 1 (Caenorhabditis elegans).